Here is a 273-residue protein sequence, read N- to C-terminus: Glutamate racemase (273 aa).

Substrate-binding positions include 7–8 and 39–40; these read DS and YG. Residue Cys70 is the Proton donor/acceptor of the active site. Substrate is bound at residue 71–72; sequence NT. Cys194 acts as the Proton donor/acceptor in catalysis. 195-196 serves as a coordination point for substrate; sequence TH.

This sequence belongs to the aspartate/glutamate racemases family.

The enzyme catalyses L-glutamate = D-glutamate. The protein operates within cell wall biogenesis; peptidoglycan biosynthesis. Provides the (R)-glutamate required for cell wall biosynthesis. In Dinoroseobacter shibae (strain DSM 16493 / NCIMB 14021 / DFL 12), this protein is Glutamate racemase.